A 124-amino-acid chain; its full sequence is Putative ankyrin repeat protein RF_1087 (124 aa).

ANK repeat units follow at residues 17-46 (NDQK…NPNI), 50-79 (NGET…IIDS), and 83-112 (FERT…TIGN).

This chain is Putative ankyrin repeat protein RF_1087, found in Rickettsia felis (strain ATCC VR-1525 / URRWXCal2) (Rickettsia azadi).